Here is a 181-residue protein sequence, read N- to C-terminus: Ribulose bisphosphate carboxylase small subunit, chloroplastic 1 (181 aa).

The transit peptide at 1–54 directs the protein to the chloroplast; the sequence is MASSMLSSAAVVTSPAQATMVAPFTGLKSSSAFPVTRKANNDITSIVSNGGRVS.

The protein belongs to the RuBisCO small chain family. As to quaternary structure, heterohexadecamer of 8 large and 8 small subunits.

It is found in the plastid. It localises to the chloroplast. In terms of biological role, ruBisCO catalyzes two reactions: the carboxylation of D-ribulose 1,5-bisphosphate, the primary event in carbon dioxide fixation, as well as the oxidative fragmentation of the pentose substrate. Both reactions occur simultaneously and in competition at the same active site. Although the small subunit is not catalytic it is essential for maximal activity. This Brassica napus (Rape) protein is Ribulose bisphosphate carboxylase small subunit, chloroplastic 1.